The sequence spans 727 residues: Beta-galactosidase 2 (727 aa).

The signal sequence occupies residues 1-27 (MSMHFRNKAWIILAILCFSSLIHSTEA). The active-site Proton donor is the Glu185. Glu254 functions as the Nucleophile in the catalytic mechanism. The N-linked (GlcNAc...) asparagine glycan is linked to Asn255.

Belongs to the glycosyl hydrolase 35 family. Ubiquitous, with higher expression levels in roots and siliques.

It is found in the secreted. The protein resides in the extracellular space. Its subcellular location is the apoplast. The catalysed reaction is Hydrolysis of terminal non-reducing beta-D-galactose residues in beta-D-galactosides.. The polypeptide is Beta-galactosidase 2 (BGAL2) (Arabidopsis thaliana (Mouse-ear cress)).